Here is a 436-residue protein sequence, read N- to C-terminus: UDP-N-acetylmuramate--L-alanine ligase (436 aa).

108–114 (GAHGKTS) is a binding site for ATP.

This sequence belongs to the MurCDEF family.

It localises to the cytoplasm. The enzyme catalyses UDP-N-acetyl-alpha-D-muramate + L-alanine + ATP = UDP-N-acetyl-alpha-D-muramoyl-L-alanine + ADP + phosphate + H(+). It functions in the pathway cell wall biogenesis; peptidoglycan biosynthesis. Cell wall formation. This Bacillus cereus (strain G9842) protein is UDP-N-acetylmuramate--L-alanine ligase.